Consider the following 317-residue polypeptide: Anamorsin homolog 2 (317 aa).

Residues 1-162 form an N-terminal SAM-like domain region; sequence MAKKVGVLLF…KPSWDSASVF (162 aa). Residues 163–229 are linker; that stretch reads QLRKGSSQKG…EDDLLTEEDL (67 aa). Residues Cys-240, Cys-247, Cys-250, and Cys-252 each coordinate [2Fe-2S] cluster. The interval 240 to 252 is fe-S binding site A; sequence CAPTKKACKNCTC. [4Fe-4S] cluster contacts are provided by Cys-278, Cys-281, Cys-289, and Cys-292. 2 short sequence motifs (cx2C motif) span residues 278–281 and 289–292; these read CGSC and CAGC. The tract at residues 278–292 is fe-S binding site B; it reads CGSCGLGDAFRCAGC.

This sequence belongs to the anamorsin family. As to quaternary structure, monomer. It depends on [2Fe-2S] cluster as a cofactor. Requires [4Fe-4S] cluster as cofactor.

The protein localises to the cytoplasm. The protein resides in the mitochondrion intermembrane space. Component of the cytosolic iron-sulfur (Fe-S) protein assembly (CIA) machinery. Required for the maturation of extramitochondrial Fe-S proteins. Part of an electron transfer chain functioning in an early step of cytosolic Fe-S biogenesis, facilitating the de novo assembly of a [4Fe-4S] cluster on the cytosolic Fe-S scaffold complex. Electrons are transferred from NADPH via a FAD- and FMN-containing diflavin oxidoreductase. Together with the diflavin oxidoreductase, also required for the assembly of the diferric tyrosyl radical cofactor of ribonucleotide reductase (RNR), probably by providing electrons for reduction during radical cofactor maturation in the catalytic small subunit. This Physcomitrium patens (Spreading-leaved earth moss) protein is Anamorsin homolog 2.